The sequence spans 394 residues: S-adenosylmethionine synthase (394 aa).

H16 provides a ligand contact to ATP. Position 18 (D18) interacts with Mg(2+). E44 contributes to the K(+) binding site. Residues E57 and Q99 each contribute to the L-methionine site. The segment at Q99–E109 is flexible loop. Residues D173–K175, R240–F241, D249, R255–K256, A272, and K276 each bind ATP. D249 is an L-methionine binding site. K280 serves as a coordination point for L-methionine.

The protein belongs to the AdoMet synthase family. In terms of assembly, homotetramer; dimer of dimers. It depends on Mg(2+) as a cofactor. Requires K(+) as cofactor.

It is found in the cytoplasm. The catalysed reaction is L-methionine + ATP + H2O = S-adenosyl-L-methionine + phosphate + diphosphate. It functions in the pathway amino-acid biosynthesis; S-adenosyl-L-methionine biosynthesis; S-adenosyl-L-methionine from L-methionine: step 1/1. Catalyzes the formation of S-adenosylmethionine (AdoMet) from methionine and ATP. The overall synthetic reaction is composed of two sequential steps, AdoMet formation and the subsequent tripolyphosphate hydrolysis which occurs prior to release of AdoMet from the enzyme. The chain is S-adenosylmethionine synthase from Lacticaseibacillus paracasei (strain ATCC 334 / BCRC 17002 / CCUG 31169 / CIP 107868 / KCTC 3260 / NRRL B-441) (Lactobacillus paracasei).